Reading from the N-terminus, the 75-residue chain is MARYFRRRKFCRFTAEGVQEIDYKDIATLKNYITESGKIVPSRITGTRAKYQRQLRRAIKRARYLSLLPYTDRHQ.

An N-acetylalanine modification is found at A2.

The protein belongs to the bacterial ribosomal protein bS18 family. As to quaternary structure, part of the 30S ribosomal subunit. Forms a tight heterodimer with protein bS6.

In terms of biological role, binds as a heterodimer with protein bS6 to the central domain of the 16S rRNA, where it helps stabilize the platform of the 30S subunit. The polypeptide is Small ribosomal subunit protein bS18 (rpsR) (Salmonella typhimurium (strain LT2 / SGSC1412 / ATCC 700720)).